We begin with the raw amino-acid sequence, 87 residues long: DNA-directed RNA polymerase subunit omega (87 aa).

It belongs to the RNA polymerase subunit omega family. As to quaternary structure, the RNAP catalytic core consists of 2 alpha, 1 beta, 1 beta' and 1 omega subunit. When a sigma factor is associated with the core the holoenzyme is formed, which can initiate transcription.

The enzyme catalyses RNA(n) + a ribonucleoside 5'-triphosphate = RNA(n+1) + diphosphate. Functionally, promotes RNA polymerase assembly. Latches the N- and C-terminal regions of the beta' subunit thereby facilitating its interaction with the beta and alpha subunits. This chain is DNA-directed RNA polymerase subunit omega, found in Pseudomonas savastanoi pv. phaseolicola (strain 1448A / Race 6) (Pseudomonas syringae pv. phaseolicola (strain 1448A / Race 6)).